Here is a 391-residue protein sequence, read N- to C-terminus: Cyclin-A1 (391 aa).

The protein belongs to the cyclin family. Cyclin AB subfamily. Interacts with the CDK1 and the CDK2 protein kinases to form a serine/threonine kinase holoenzyme complex. The cyclin subunit imparts substrate specificity to the complex.

Its subcellular location is the nucleus. Its function is as follows. May be involved in the control of the cell cycle at the G1/S (start) and G2/M (mitosis) transitions. This chain is Cyclin-A1 (ccna1), found in Carassius auratus (Goldfish).